The primary structure comprises 431 residues: Enolase (431 aa).

Q167 serves as a coordination point for (2R)-2-phosphoglycerate. E209 serves as the catalytic Proton donor. Mg(2+) is bound by residues D246, E289, and D316. (2R)-2-phosphoglycerate-binding residues include K341, R370, S371, and K392. The active-site Proton acceptor is K341.

Belongs to the enolase family. In terms of assembly, component of the RNA degradosome, a multiprotein complex involved in RNA processing and mRNA degradation. Requires Mg(2+) as cofactor.

The protein resides in the cytoplasm. It is found in the secreted. It localises to the cell surface. It carries out the reaction (2R)-2-phosphoglycerate = phosphoenolpyruvate + H2O. It participates in carbohydrate degradation; glycolysis; pyruvate from D-glyceraldehyde 3-phosphate: step 4/5. Its function is as follows. Catalyzes the reversible conversion of 2-phosphoglycerate (2-PG) into phosphoenolpyruvate (PEP). It is essential for the degradation of carbohydrates via glycolysis. In Shewanella sp. (strain MR-4), this protein is Enolase.